The sequence spans 341 residues: MRLGRVCPRGPGKVRSPRHRFSCTLFVSTTGSSCGHHGPQLAASSNPSVLPGLHEQPPQASHSRPLNGLLRLGIPGDMYARSEPFAPGPMARSDTLATATALHGYGGMNLTMNLTAPHGPGAFFRYMRQPIKQELICKWLGDDSPMSPRPCSKTFSTMHELVTHVTVEHVGGPEQANHICFWEECPRQGKPFKAKYKLVNHIRVHTGEKPFPCPFPGCGKVFARSENLKIHKRTHTGEKPFRCEFEGCERRFANSSDRKKHSHVHTSDKPYMCKVRGCDKCYTHPSSLRKHMKVHGRSPPPSSGYDSAITSALASPSLESGREPSVACSAAVVVRGTDVSE.

The segment at 36–66 (HHGPQLAASSNPSVLPGLHEQPPQASHSRPL) is disordered. The C2H2-type 1; atypical zinc finger occupies 135-169 (LICKWLGDDSPMSPRPCSKTFSTMHELVTHVTVEH). The segment at 178–205 (HICFWEECPRQGKPFKAKYKLVNHIRVH) adopts a C2H2-type 2; atypical zinc-finger fold. 3 C2H2-type zinc fingers span residues 211 to 235 (FPCP…KRTH), 241 to 265 (FRCE…SHVH), and 271 to 295 (YMCK…MKVH). Residues 289-309 (RKHMKVHGRSPPPSSGYDSAI) form a disordered region.

It belongs to the GLI C2H2-type zinc-finger protein family. As to expression, exclusively expressed in the cerebellum.

Its subcellular location is the nucleus. Functionally, binds to DNA. This Mus musculus (Mouse) protein is Zinc finger protein ZIC 4 (Zic4).